The following is a 157-amino-acid chain: Recombination endonuclease VII (157 aa).

Residues Cys-23 and Cys-26 each contribute to the Zn(2+) site. Ca(2+) is bound at residue Asp-40. 2 residues coordinate Zn(2+): Cys-58 and Cys-61. Position 62 (Asn-62) interacts with Ca(2+).

Homodimer. Ca(2+) is required as a cofactor. Zn(2+) serves as cofactor.

Functionally, cleaves DNA cruciform and Y-structures as well as heteroduplex loops. Resolves Holliday junctions, recognizes a broad spectrum of DNA substrates ranging from branched DNAs to single base mismatches. The sequence is that of Recombination endonuclease VII (49) from Enterobacteria phage T4 (Bacteriophage T4).